Consider the following 157-residue polypeptide: 2-C-methyl-D-erythritol 2,4-cyclodiphosphate synthase (157 aa).

A divalent metal cation-binding residues include Asp-8 and His-10. Residues 8–10 (DVH) and 34–35 (HS) contribute to the 4-CDP-2-C-methyl-D-erythritol 2-phosphate site. His-42 is a binding site for a divalent metal cation. 4-CDP-2-C-methyl-D-erythritol 2-phosphate is bound by residues 56–58 (DIG), 61–65 (FPDTD), 100–106 (AQAPKMA), 132–135 (TTTE), Phe-139, and Arg-142.

It belongs to the IspF family. In terms of assembly, homotrimer. It depends on a divalent metal cation as a cofactor.

The enzyme catalyses 4-CDP-2-C-methyl-D-erythritol 2-phosphate = 2-C-methyl-D-erythritol 2,4-cyclic diphosphate + CMP. It participates in isoprenoid biosynthesis; isopentenyl diphosphate biosynthesis via DXP pathway; isopentenyl diphosphate from 1-deoxy-D-xylulose 5-phosphate: step 4/6. In terms of biological role, involved in the biosynthesis of isopentenyl diphosphate (IPP) and dimethylallyl diphosphate (DMAPP), two major building blocks of isoprenoid compounds. Catalyzes the conversion of 4-diphosphocytidyl-2-C-methyl-D-erythritol 2-phosphate (CDP-ME2P) to 2-C-methyl-D-erythritol 2,4-cyclodiphosphate (ME-CPP) with a corresponding release of cytidine 5-monophosphate (CMP). The sequence is that of 2-C-methyl-D-erythritol 2,4-cyclodiphosphate synthase from Pseudomonas syringae pv. tomato (strain ATCC BAA-871 / DC3000).